Reading from the N-terminus, the 184-residue chain is Acireductone dioxygenase (184 aa).

Fe(2+) is bound by residues H87, H89, E93, and H137. Ni(2+)-binding residues include H87, H89, E93, and H137.

Belongs to the acireductone dioxygenase (ARD) family. The cofactor is Fe(2+). Requires Ni(2+) as cofactor.

It is found in the cytoplasm. Its subcellular location is the nucleus. It catalyses the reaction 1,2-dihydroxy-5-(methylsulfanyl)pent-1-en-3-one + O2 = 4-methylsulfanyl-2-oxobutanoate + formate + 2 H(+). The enzyme catalyses 1,2-dihydroxy-5-(methylsulfanyl)pent-1-en-3-one + O2 = 3-(methylsulfanyl)propanoate + CO + formate + 2 H(+). It participates in amino-acid biosynthesis; L-methionine biosynthesis via salvage pathway; L-methionine from S-methyl-5-thio-alpha-D-ribose 1-phosphate: step 5/6. Catalyzes 2 different reactions between oxygen and the acireductone 1,2-dihydroxy-3-keto-5-methylthiopentene (DHK-MTPene) depending upon the metal bound in the active site. Fe-containing acireductone dioxygenase (Fe-ARD) produces formate and 2-keto-4-methylthiobutyrate (KMTB), the alpha-ketoacid precursor of methionine in the methionine recycle pathway. Ni-containing acireductone dioxygenase (Ni-ARD) produces methylthiopropionate, carbon monoxide and formate, and does not lie on the methionine recycle pathway. This chain is Acireductone dioxygenase, found in Ciona intestinalis (Transparent sea squirt).